The primary structure comprises 233 residues: Somatolactin (233 aa).

Residues 1-24 form the signal peptide; sequence MNMMQVMQSVVWAVLLWPCLVSLG. 3 disulfides stabilise this stretch: Cys29-Cys39, Cys89-Cys205, and Cys222-Cys230.

The protein belongs to the somatotropin/prolactin family. Pituitary gland.

Its subcellular location is the secreted. In terms of biological role, may be associated with ion regulation and reproduction. This Oncorhynchus keta (Chum salmon) protein is Somatolactin.